Consider the following 750-residue polypeptide: DDT domain-containing protein DDR4 (750 aa).

Residues 1 to 125 (MGSSSDIVPD…ITSLVPPPEP (125 aa)) form a disordered region. Over residues 45 to 54 (RAQQRLQELQ) the composition is skewed to low complexity. The segment covering 55-77 (AAERKLKPPKKEYKREQHRRREE) has biased composition (basic and acidic residues). Over residues 78–100 (VVEEDEDSEDDDQEDEENDGDDE) the composition is skewed to acidic residues. One can recognise a DDT domain in the interval 133-192 (LRSMWELASVLNFLHVFRPLLKINAEFSAEEFETALLTPNDTLSDIHIPLLKAIPPVTRM). Disordered regions lie at residues 450–505 (NGRS…TDFV) and 532–750 (LKKR…TDNS). The segment covering 451–471 (GRSTSSTHPTEPVNDTASGRS) has biased composition (polar residues). Residues 545–585 (EGDEEKGDEEYKWDEDNAEYEEEEEEEEEEDSLSASEEDSD) are compositionally biased toward acidic residues. The segment covering 595 to 606 (RRETKLRSRSND) has biased composition (basic and acidic residues). A compositionally biased stretch (polar residues) spans 688–707 (NADTTNGKENNQLNKSNGTT). Basic and acidic residues predominate over residues 741–750 (LKDDDKTDNS).

In terms of assembly, interacts (via the DDT domain) with CHR11 (via C-terminus).

It is found in the nucleus. Functionally, probable transcription regulator. The sequence is that of DDT domain-containing protein DDR4 from Arabidopsis thaliana (Mouse-ear cress).